The primary structure comprises 661 residues: MKFTRTLVLASTSLLATVATSQAQEVKRDTKKQGEVVLKPITIISHGKDNIEATGGTVLTYKDIEKLQPANVSELFSRQSSIAVSGGGGPSKRIHVLGMEQSNLAVSVDGVPQTATSWHHTGSNVIDPAFLKRVEVEAGAAAADSGFGAAAGAIRYETVNALDLLEPGKTFGARIIGSYGTNGRGFSGSTAAYGLKDGFDWLLMLHGTSGHNYKNGDGTEILGTEPAARNILGKAGYEFDGNRIDIGYERSRDKADRLIKMNMGLPGDTEYPLEVARDSVNIKYTRTDATDMWDPEVQLYYNRNDYWRNDYQNRTNGNMILKEDLYGGKLQNTFTIDYGKITAGIDFGKHDYNTDNYGHNDRRYRKFNTQQVGAFTQGRFEFDNGFSLSTGARYDYSRFADWNDEVFSDSGASVNGTLSYKFNEHIEVFAGASRTWLGYVLGDYGYVHARNNAFYTDPTFSPGRARNYKAGVNFGGADWSAGITLFDTRIAGLPNYDSQKLGNDPEEYRSRGFTLNARYIWNYTTIGATFTKAKVTAGDDPVLPNSGSFMPIGDMATLFIDQEIPDYNMKVGATLAWAGRISDEAATAANFYDQPAYTVVNAYAEWNPPAVKNMTLRVGVENLFNENYYERTSFAPSQNRGGIDPVWAPGRTFTFQTAFKF.

The signal sequence occupies residues 1-23 (MKFTRTLVLASTSLLATVATSQA). The TBDR plug domain occupies 48 to 159 (KDNIEATGGT…AAGAIRYETV (112 aa)). The TBDR beta-barrel domain occupies 170–661 (TFGARIIGSY…TFTFQTAFKF (492 aa)).

This sequence belongs to the TonB-dependent receptor family.

Its subcellular location is the cell outer membrane. Heme transporter. The polypeptide is Heme transporter BhuA (bhuA) (Brucella ovis (strain ATCC 25840 / 63/290 / NCTC 10512)).